The following is a 182-amino-acid chain: Peptide methionine sulfoxide reductase MsrA (182 aa).

Cys-13 is a catalytic residue.

It belongs to the MsrA Met sulfoxide reductase family.

It carries out the reaction L-methionyl-[protein] + [thioredoxin]-disulfide + H2O = L-methionyl-(S)-S-oxide-[protein] + [thioredoxin]-dithiol. The catalysed reaction is [thioredoxin]-disulfide + L-methionine + H2O = L-methionine (S)-S-oxide + [thioredoxin]-dithiol. Functionally, has an important function as a repair enzyme for proteins that have been inactivated by oxidation. Catalyzes the reversible oxidation-reduction of methionine sulfoxide in proteins to methionine. This chain is Peptide methionine sulfoxide reductase MsrA, found in Mycobacterium bovis (strain ATCC BAA-935 / AF2122/97).